A 180-amino-acid chain; its full sequence is Pro-glucagon (180 aa).

Positions 1-20 are cleaved as a signal peptide; that stretch reads MKNIYIVAGFFVVLVQGSWQ. Positions 25–59 are disordered; the sequence is DTEEKSRSFPASQTDPLEDPDQINEDKRHSQGTFT. A Phosphoserine modification is found at serine 54. Positions 84 to 89 are excised as a propeptide; the sequence is NRNNIA. Phosphoserine is present on residues serine 105 and serine 108. Arginine amide is present on arginine 127. A propeptide spanning residues 131 to 145 is cleaved from the precursor; the sequence is DFPEEVTIVEELGRR. 2 positions are modified to phosphoserine: serine 150 and serine 152.

Belongs to the glucagon family. Post-translationally, proglucagon is post-translationally processed in a tissue-specific manner in pancreatic A cells and intestinal L cells. In pancreatic A cells, the major bioactive hormone is glucagon cleaved by PCSK2/PC2. In the intestinal L cells PCSK1/PC1 liberates GLP-1, GLP-2, glicentin and oxyntomodulin. GLP-1 is further N-terminally truncated by post-translational processing in the intestinal L cells resulting in GLP-1(7-37) GLP-1-(7-36)amide. The C-terminal amidation is neither important for the metabolism of GLP-1 nor for its effects on the endocrine pancreas.

The protein resides in the secreted. In terms of biological role, plays a key role in glucose metabolism and homeostasis. Regulates blood glucose by increasing gluconeogenesis and decreasing glycolysis. A counterregulatory hormone of insulin, raises plasma glucose levels in response to insulin-induced hypoglycemia. Plays an important role in initiating and maintaining hyperglycemic conditions in diabetes. Functionally, potent stimulator of glucose-dependent insulin release. Also stimulates insulin release in response to IL6. Plays important roles on gastric motility and the suppression of plasma glucagon levels. May be involved in the suppression of satiety and stimulation of glucose disposal in peripheral tissues, independent of the actions of insulin. Has growth-promoting activities on intestinal epithelium. May also regulate the hypothalamic pituitary axis (HPA) via effects on LH, TSH, CRH, oxytocin, and vasopressin secretion. Increases islet mass through stimulation of islet neogenesis and pancreatic beta cell proliferation. Inhibits beta cell apoptosis. Its function is as follows. Stimulates intestinal growth and up-regulates villus height in the small intestine, concomitant with increased crypt cell proliferation and decreased enterocyte apoptosis. The gastrointestinal tract, from the stomach to the colon is the principal target for GLP-2 action. Plays a key role in nutrient homeostasis, enhancing nutrient assimilation through enhanced gastrointestinal function, as well as increasing nutrient disposal. Stimulates intestinal glucose transport and decreases mucosal permeability. Significantly reduces food intake. Inhibits gastric emptying in humans. Suppression of gastric emptying may lead to increased gastric distension, which may contribute to satiety by causing a sensation of fullness. In terms of biological role, may modulate gastric acid secretion and the gastro-pyloro-duodenal activity. May play an important role in intestinal mucosal growth in the early period of life. This chain is Pro-glucagon (GCG), found in Mesocricetus auratus (Golden hamster).